A 212-amino-acid chain; its full sequence is Peptide methionine sulfoxide reductase MsrA (212 aa).

Cys-52 is a catalytic residue.

This sequence belongs to the MsrA Met sulfoxide reductase family.

It carries out the reaction L-methionyl-[protein] + [thioredoxin]-disulfide + H2O = L-methionyl-(S)-S-oxide-[protein] + [thioredoxin]-dithiol. The enzyme catalyses [thioredoxin]-disulfide + L-methionine + H2O = L-methionine (S)-S-oxide + [thioredoxin]-dithiol. Functionally, has an important function as a repair enzyme for proteins that have been inactivated by oxidation. Catalyzes the reversible oxidation-reduction of methionine sulfoxide in proteins to methionine. The protein is Peptide methionine sulfoxide reductase MsrA of Salmonella paratyphi B (strain ATCC BAA-1250 / SPB7).